The primary structure comprises 356 residues: MLSSILKKIQPSLLVNFRIITRTYATKEVTVRDAINSALDEELARDEKVFIMGEEVAQYNGAYKITKGLFDKYGGDRIIDTPITEAGFAGIGVGAAMAGTRPIIEFMTFNFAMQAIDHIINSSAKTHYMSGGKVFNPIVWRGPNGPPTAVGAQHSQCFAAWYGSVPGLKVVAPWSAADHRGLLKSAIRDDNPVVYLESELLYNYKFDLSDQEQDKEYLVPIGKAKVEREGKDVTIVGFSRIVSNCMEAAEILAKEGISAEVINLRTIRPIDAETIVNSLKKTNKLVTVEEGWAQSGIGAEISALMMEHAFDYLDAPIERICGADVPMPYASNLENAAMVQTQNIVNAAKRVTQRNK.

The N-terminal 25 residues, 1–25 (MLSSILKKIQPSLLVNFRIITRTYA), are a transit peptide targeting the mitochondrion. Thiamine diphosphate is bound at residue Glu-85. Ile-138, Ala-186, Ile-187, Asp-189, and Asn-191 together coordinate K(+).

Tetramer of 2 alpha and 2 beta subunits. Thiamine diphosphate is required as a cofactor.

The protein resides in the mitochondrion matrix. It carries out the reaction N(6)-[(R)-lipoyl]-L-lysyl-[protein] + pyruvate + H(+) = N(6)-[(R)-S(8)-acetyldihydrolipoyl]-L-lysyl-[protein] + CO2. The pyruvate dehydrogenase complex catalyzes the overall conversion of pyruvate to acetyl-CoA and CO(2). It contains multiple copies of three enzymatic components: pyruvate dehydrogenase (E1), dihydrolipoamide acetyltransferase (E2) and lipoamide dehydrogenase (E3). In Dictyostelium discoideum (Social amoeba), this protein is Pyruvate dehydrogenase E1 component subunit beta, mitochondrial (pdhB).